We begin with the raw amino-acid sequence, 401 residues long: L-rhamnonate dehydratase (401 aa).

Positions 29 and 55 each coordinate substrate. Mg(2+) contacts are provided by Asp-222, Glu-248, and Glu-276. Catalysis depends on His-325, which acts as the Proton acceptor. Residue Glu-345 participates in substrate binding.

Belongs to the mandelate racemase/muconate lactonizing enzyme family. RhamD subfamily. As to quaternary structure, homooctamer; tetramer of dimers. Requires Mg(2+) as cofactor.

The catalysed reaction is L-rhamnonate = 2-dehydro-3-deoxy-L-rhamnonate + H2O. Functionally, catalyzes the dehydration of L-rhamnonate to 2-keto-3-deoxy-L-rhamnonate (KDR). This is L-rhamnonate dehydratase from Salmonella schwarzengrund (strain CVM19633).